A 587-amino-acid chain; its full sequence is Beta-(1--&gt;2)glucan export ATP-binding/permease protein NdvA (587 aa).

The region spanning 21–301 (VSLVVVANIV…MRQFATQIFE (281 aa)) is the ABC transmembrane type-1 domain. A run of 6 helical transmembrane segments spans residues 23–43 (LVVV…ILFG), 57–77 (PILF…VLVA), 128–148 (GLWL…ALLI), 158–178 (LSAV…VVMS), 248–268 (MAST…VQAG), and 272–292 (VGDV…LDLM). The region spanning 335 to 569 (IEFRDVSFGF…NGRFAALLRA (235 aa)) is the ABC transporter domain. Residue 368-375 (GPTGAGKT) participates in ATP binding.

Belongs to the ABC transporter superfamily. Beta-(1--&gt;2)glucan exporter (TC 3.A.1.108.1) family. As to quaternary structure, homodimer.

The protein localises to the cell inner membrane. It carries out the reaction [(1-&gt;2)-beta-D-glucosyl](n)(in) + ATP + H2O = [(1-&gt;2)-beta-D-glucosyl](n)(out) + ADP + phosphate + H(+). Functionally, involved in beta-(1--&gt;2)glucan export. Transmembrane domains (TMD) form a pore in the inner membrane and the ATP-binding domain (NBD) is responsible for energy generation. The polypeptide is Beta-(1--&gt;2)glucan export ATP-binding/permease protein NdvA (Rhizobium johnstonii (strain DSM 114642 / LMG 32736 / 3841) (Rhizobium leguminosarum bv. viciae)).